The chain runs to 156 residues: Transcriptional repressor NrdR (156 aa).

Residues 3-34 (CPFCQHDDTQVLDTRISEEGDSIRRRRRCVSC) fold into a zinc finger. Residues 49–139 (PVIVKKNGSR…VYKSFEDVAE (91 aa)) enclose the ATP-cone domain.

This sequence belongs to the NrdR family. Zn(2+) serves as cofactor.

In terms of biological role, negatively regulates transcription of bacterial ribonucleotide reductase nrd genes and operons by binding to NrdR-boxes. The sequence is that of Transcriptional repressor NrdR from Herminiimonas arsenicoxydans.